A 227-amino-acid chain; its full sequence is Cytochrome c oxidase subunit 2 (227 aa).

The Mitochondrial intermembrane segment spans residues 1–26; the sequence is MATWSNFNLQNSASPLMEQIIFFHDH. The chain crosses the membrane as a helical span at residues 27-51; that stretch reads TLVILIMITILVGYLMISLFFNSYI. Residues 52–62 lie on the Mitochondrial matrix side of the membrane; that stretch reads NRFLLEGQMIE. Residues 63-81 form a helical membrane-spanning segment; it reads LIWTILPAITLIFIALPSL. Over 82–227 the chain is Mitochondrial intermembrane; the sequence is RLLYLLDELN…NFINWINNYS (146 aa). His-161, Cys-196, Glu-198, Cys-200, His-204, and Met-207 together coordinate Cu cation. Position 198 (Glu-198) interacts with Mg(2+).

This sequence belongs to the cytochrome c oxidase subunit 2 family. As to quaternary structure, component of the cytochrome c oxidase (complex IV, CIV), a multisubunit enzyme composed of a catalytic core of 3 subunits and several supernumerary subunits. The complex exists as a monomer or a dimer and forms supercomplexes (SCs) in the inner mitochondrial membrane with ubiquinol-cytochrome c oxidoreductase (cytochrome b-c1 complex, complex III, CIII). Cu cation is required as a cofactor.

Its subcellular location is the mitochondrion inner membrane. The enzyme catalyses 4 Fe(II)-[cytochrome c] + O2 + 8 H(+)(in) = 4 Fe(III)-[cytochrome c] + 2 H2O + 4 H(+)(out). Functionally, component of the cytochrome c oxidase, the last enzyme in the mitochondrial electron transport chain which drives oxidative phosphorylation. The respiratory chain contains 3 multisubunit complexes succinate dehydrogenase (complex II, CII), ubiquinol-cytochrome c oxidoreductase (cytochrome b-c1 complex, complex III, CIII) and cytochrome c oxidase (complex IV, CIV), that cooperate to transfer electrons derived from NADH and succinate to molecular oxygen, creating an electrochemical gradient over the inner membrane that drives transmembrane transport and the ATP synthase. Cytochrome c oxidase is the component of the respiratory chain that catalyzes the reduction of oxygen to water. Electrons originating from reduced cytochrome c in the intermembrane space (IMS) are transferred via the dinuclear copper A center (CU(A)) of subunit 2 and heme A of subunit 1 to the active site in subunit 1, a binuclear center (BNC) formed by heme A3 and copper B (CU(B)). The BNC reduces molecular oxygen to 2 water molecules using 4 electrons from cytochrome c in the IMS and 4 protons from the mitochondrial matrix. This Choristoneura rosaceana (Oblique banded leafroller) protein is Cytochrome c oxidase subunit 2 (COII).